Here is a 1037-residue protein sequence, read N- to C-terminus: Signal-induced proliferation-associated protein 1 (1037 aa).

Positions 1–85 are disordered; it reads MWAGGVGSPR…ASRPAATPTR (85 aa). Thr-62 carries the phosphothreonine modification. Phosphoserine occurs at positions 65, 178, 299, and 309. The 219-residue stretch at 316–534 folds into the Rap-GAP domain; that stretch reads LLTLDEQVLS…RTRQQYLQDL (219 aa). The PDZ domain maps to 682–758; sequence ELALPRDGQG…VCVTVLPPDE (77 aa). Ser-812 and Ser-834 each carry phosphoserine. Disordered regions lie at residues 830 to 849 and 855 to 898; these read HNSLSSGSSLSDEAPVLPNT and LVTT…ASIL. Over residues 871–881 the composition is skewed to low complexity; that stretch reads PPSQDQSGSPS. Ser-907 bears the Phosphoserine mark. A disordered region spans residues 943–969; that stretch reads REGQPISESGDPKEALKCDSEPEPGSL. Positions 952-962 are enriched in basic and acidic residues; it reads GDPKEALKCDS. Residues 968–1025 adopt a coiled-coil conformation; it reads SLSEKVSHLESMLWKLQEDLQREKADRAALEEEVRSLRHNNQRLLAESESAATRLLLA.

Interacts with RRP1B; the interaction leads to inhibition of SIPA1 GTPase activity. Preferentially expressed in both fetal and adult lymphohematopoietic tissues.

It is found in the nucleus. The protein localises to the cytoplasm. Its subcellular location is the perinuclear region. The protein resides in the endomembrane system. In terms of biological role, GTPase activator for the nuclear Ras-related regulatory proteins Rap1, Rsr1 and Ran in vitro, converting them to the putatively inactive GDP-bound state. Affects cell cycle progression. The polypeptide is Signal-induced proliferation-associated protein 1 (Sipa1) (Mus musculus (Mouse)).